Here is a 405-residue protein sequence, read N- to C-terminus: Acetylornithine aminotransferase 1 (405 aa).

Residues Gly108 to Ala109 and Phe141 each bind pyridoxal 5'-phosphate. Residue Arg144 participates in N(2)-acetyl-L-ornithine binding. Asp226–Gln229 is a pyridoxal 5'-phosphate binding site. Position 255 is an N6-(pyridoxal phosphate)lysine (Lys255). Thr283 serves as a coordination point for N(2)-acetyl-L-ornithine. Thr284 is a pyridoxal 5'-phosphate binding site.

Belongs to the class-III pyridoxal-phosphate-dependent aminotransferase family. ArgD subfamily. As to quaternary structure, homodimer. The cofactor is pyridoxal 5'-phosphate.

The protein localises to the cytoplasm. It catalyses the reaction N(2)-acetyl-L-ornithine + 2-oxoglutarate = N-acetyl-L-glutamate 5-semialdehyde + L-glutamate. It functions in the pathway amino-acid biosynthesis; L-arginine biosynthesis; N(2)-acetyl-L-ornithine from L-glutamate: step 4/4. In Pseudomonas syringae pv. tomato (strain ATCC BAA-871 / DC3000), this protein is Acetylornithine aminotransferase 1.